The sequence spans 378 residues: UPF0754 membrane protein Bcer98_0694 (378 aa).

Residues 358–378 traverse the membrane as a helical segment; it reads LGALLGGTIGLMQGILLLFLM.

The protein belongs to the UPF0754 family.

It localises to the cell membrane. The chain is UPF0754 membrane protein Bcer98_0694 from Bacillus cytotoxicus (strain DSM 22905 / CIP 110041 / 391-98 / NVH 391-98).